The primary structure comprises 160 residues: Interleukin-36 alpha (160 aa).

A propeptide spanning residues 1–7 (MNKEKEL) is cleaved from the precursor. Position 98 is a 3'-nitrotyrosine (tyrosine 98).

The protein belongs to the IL-1 family. In terms of assembly, interacts with TMED10; the interaction mediates the translocation from the cytoplasm into the ERGIC (endoplasmic reticulum-Golgi intermediate compartment) and thereby secretion. In terms of processing, N-terminal truncation leads to a dramatic enhancement of its activity (&gt;1000-fold). As to expression, highly expressed in embryonic tissue and in tissues containing epithelial cells. Elevated expression levels are detected in chronic kidney disease; expressed inepithelia from the distal convoluted tubules (DCTs) to the cortical collecting ducts (CCDs) in single nephrons (at protein level).

Its subcellular location is the cytoplasm. The protein localises to the secreted. Functionally, cytokine that binds to and signals through the IL1RL2/IL-36R receptor which in turn activates NF-kappa-B and MAPK signaling pathways in target cells linked to a pro-inflammatory response. Part of the IL-36 signaling system that is thought to be present in epithelial barriers and to take part in local inflammatory response; similar to the IL-1 system with which it shares the coreceptor IL1RAP. Seems to be involved in skin inflammatory response by acting on keratinocytes, dendritic cells and indirectly on T-cells to drive tissue infiltration, cell maturation and cell proliferation. Induces the production of pro-inflammatory cytokines, including IL-12, Il-1 beta, IL-6, TNF-alpha and IL-23 in bone marrow-derived dendritic cells (BMDCs). Involved in dendritic cell maturation by stimulating the surface expression of CD80, CD86 and MHC class II. Induces the production of IFN-gamma, IL-4 and IL-17 by cultured CD4(+) T-cells and splenocytes. May play a role in pro-inflammatory effects in the lung: induces the expression of CXCL1 and CXCL2 in the lung, and the expression of TNF-alpha, IL-36c, IL-1A, IL-1B, CXCL1 and CXCL2 in isolated splenic CD11c(+) alveolar macrophages. May be involved in T-cell maturation by stimulating the surface expression of CD40 and modestly CD80 and CD86 in splenic CD11c(+) cells. May be involved in CD4(+) T-cell proliferation. Induces NF-kappa B activation in macrophages. The protein is Interleukin-36 alpha of Mus musculus (Mouse).